The primary structure comprises 90 residues: Molybdopterin synthase sulfur carrier subunit (90 aa).

Glycine 90 is subject to 1-thioglycine; alternate. Glycine 90 carries the glycyl adenylate; alternate modification.

This sequence belongs to the MoaD family. MOCS2A subfamily. Heterotetramer; composed of 2 small (Mocs2A) and 2 large (Mocs2B) subunits. Post-translationally, C-terminal thiocarboxylation occurs in 2 steps, it is first acyl-adenylated (-COAMP) via the hesA/moeB/thiF part of MOCS3, then thiocarboxylated (-COSH) via the rhodanese domain of MOCS3.

It localises to the cytoplasm. The protein operates within cofactor biosynthesis; molybdopterin biosynthesis. Acts as a sulfur carrier required for molybdopterin biosynthesis. Component of the molybdopterin synthase complex that catalyzes the conversion of precursor Z into molybdopterin by mediating the incorporation of 2 sulfur atoms into precursor Z to generate a dithiolene group. In the complex, serves as sulfur donor by being thiocarboxylated (-COSH) at its C-terminus by MOCS3. After interaction with Mocs2B, the sulfur is then transferred to precursor Z to form molybdopterin. This chain is Molybdopterin synthase sulfur carrier subunit, found in Drosophila sechellia (Fruit fly).